A 204-amino-acid chain; its full sequence is Tetraspanin-13 (204 aa).

At 1–19 (MVCGGFSCSKNCLCALNLL) the chain is on the cytoplasmic side. Residues 20–40 (YTLVSLLLIGIAAWGIGFGLI) traverse the membrane as a helical segment. The Extracellular portion of the chain corresponds to 41-44 (SSLR). The chain crosses the membrane as a helical span at residues 45 to 65 (VVGVVIAVGIFLFLIALVGLI). Residues 66–72 (GAVKHHQ) lie on the Cytoplasmic side of the membrane. The chain crosses the membrane as a helical span at residues 73–93 (VLLFFYMIILLLVFIVQFSVS). At 94 to 167 (CACLALNREQ…IGEYAGEVLR (74 aa)) the chain is on the extracellular side. Residues Asn-113 and Asn-137 are each glycosylated (N-linked (GlcNAc...) asparagine). Ser-143 carries the post-translational modification Phosphoserine. Residues 168–188 (FVGGIGLFFSFTEILGVWLTY) form a helical membrane-spanning segment. Residues 189–204 (RYRNQKDPRANPSAFL) lie on the Cytoplasmic side of the membrane.

It belongs to the tetraspanin (TM4SF) family.

It is found in the membrane. This Mus musculus (Mouse) protein is Tetraspanin-13 (Tspan13).